Here is a 514-residue protein sequence, read N- to C-terminus: Cytochrome P450 monooxygenase aneD (514 aa).

Residues 6–26 form a helical membrane-spanning segment; sequence ICTLLAVIATTSLGLLFLSII. N-linked (GlcNAc...) asparagine glycosylation is found at N113, N261, and N347. A heme-binding site is contributed by C424.

It belongs to the cytochrome P450 family. Heme serves as cofactor.

The protein localises to the membrane. It catalyses the reaction asperaculane D + reduced [NADPH--hemoprotein reductase] + O2 = asperaculane E + oxidized [NADPH--hemoprotein reductase] + H2O + H(+). It participates in secondary metabolite biosynthesis. Cytochrome P450 monooxygenase; part of the gene cluster that mediates the biosynthesis of aculenes, a unique type of norsesquiterpenes that contain a nordaucane skeleton linked to an L-proline moiety and are of mixed biosynthetic origin. The pathway begins with the synthesis of dauca-4,7-diene by the terpene cyclase aneC using farnesyl pyrophosphate (FPP) as substrate. The cytochrome P450 monooxygenase aneF then performs the initial oxidation at C-12 of dauca-4,7-diene to yield asperaculane D. Asperaculane D is substrate of the cytochrome P450 monooxygenase aneD for C-10 hydroxylation to yield asperaculane E. The cytochrome P450 monooxygenase aneG then converts asperaculane E into aculene D via C-2 oxidation. The monomodular nonribosomal peptide synthtase aneB adenylates L-proline and the thiohydrolase aneE transfers this activated L-proline derivative to aculenes D and C to produce respectively aculenes B and A. The dioxygenase aneA converts aculene D into aculene C, and aculene B into aculene A by introducing the 5,6-alkene moiety. Asperculanes A, B, C and F, as well as 14-prolyl asperculane C, might be shunt products of the pathway. The chain is Cytochrome P450 monooxygenase aneD from Aspergillus aculeatus (strain ATCC 16872 / CBS 172.66 / WB 5094).